The sequence spans 844 residues: Janus kinase and microtubule-interacting protein 3 (844 aa).

Positions 8–258 (SRAKGDKAEA…QLSQVREADR (251 aa)) form a coiled coil. The tract at residues 250–290 (LSQVREADRHPGSPRRELPHAAGAGDASDHSGSPEQQLDEK) is disordered. Over residues 254-268 (READRHPGSPRRELP) the composition is skewed to basic and acidic residues. Low complexity predominate over residues 269-282 (HAAGAGDASDHSGS). Residues 289–421 (EKDARRFQLK…DELSKTLETA (133 aa)) adopt a coiled-coil conformation. Phosphoserine is present on Ser384. The span at 466–483 (SDGSSVSYQTDRTDQTPC) shows a compositional bias: polar residues. The tract at residues 466 to 489 (SDGSSVSYQTDRTDQTPCTPDDDL) is disordered. Coiled-coil stretches lie at residues 493–621 (MAKE…RERK) and 683–834 (VLTL…FLFL).

It belongs to the JAKMIP family. In terms of tissue distribution, specifically expressed in the CNS and endocrine tissues. Also detected in other tissues including heart, testis and prostate.

The protein resides in the golgi apparatus. In Homo sapiens (Human), this protein is Janus kinase and microtubule-interacting protein 3 (JAKMIP3).